Here is a 535-residue protein sequence, read N- to C-terminus: Probable C4-dicarboxylate sensor kinase (535 aa).

Residues 1–11 (MNKKKLSIRWK) lie on the Cytoplasmic side of the membrane. A helical transmembrane segment spans residues 12 to 32 (ITILSYILVIFSFLIGGIVLI). Over 33–172 (GNIQHTEERE…IADILLHLKR (140 aa)) the chain is Extracellular. The chain crosses the membrane as a helical span at residues 173–193 (DIAFIVVLTLGFGLAGSFLLA). The Cytoplasmic segment spans residues 194–535 (RHIKKQMFQL…MKGEEAQHGS (342 aa)). Residues 213-276 (EERTATFHSM…PEIVERNKAV (64 aa)) enclose the PAS domain. A Histidine kinase domain is found at 333-528 (VQNHEHMNKL…SFSIVFPMKG (196 aa)). Phosphohistidine; by autocatalysis is present on His-336.

Its subcellular location is the cell membrane. It catalyses the reaction ATP + protein L-histidine = ADP + protein N-phospho-L-histidine.. Member of the two-component regulatory system DctS/DctR. Probably activates DctR by phosphorylation. Essential for expression of dctP. The chain is Probable C4-dicarboxylate sensor kinase (dctS) from Bacillus subtilis (strain 168).